A 686-amino-acid polypeptide reads, in one-letter code: Band 4.1-like protein 4A (686 aa).

One can recognise an FERM domain in the interval 11 to 299 (FYCEVLLLDE…EHHTFFRMPE (289 aa)). Ser304 carries the phosphoserine modification. A disordered region spans residues 331–686 (RDLSIQLPRP…IQASRLKTET (356 aa)). Polar residues predominate over residues 357–376 (AQTQPAESNSISRITANMEN). Phosphoserine occurs at positions 389, 393, and 402. Positions 418 to 428 (GPQSGLYNSPS) are enriched in polar residues. Low complexity predominate over residues 479 to 489 (RCNTSSGSESE). Basic and acidic residues-rich tracts occupy residues 518-527 (VLRRQKEKNQ) and 547-561 (QAKE…KELV). Positions 588-601 (IRHSHSPRSYRQYR) are enriched in basic residues. Basic and acidic residues predominate over residues 648–658 (GSKDSLMEEKP). Residues 673-686 (TIKTIQASRLKTET) are compositionally biased toward polar residues.

Expressed in many tissues. High levels of expression in brain, liver, thymus and peripheral blood leukocytes and low levels of expression in heart, kidney, testis and colon.

It is found in the cytoplasm. Its subcellular location is the cytoskeleton. The chain is Band 4.1-like protein 4A from Homo sapiens (Human).